Consider the following 71-residue polypeptide: Translation initiation factor IF-1 (71 aa).

The region spanning 1-71 (MAKQSAIEQD…LSKARITYRY (71 aa)) is the S1-like domain.

Belongs to the IF-1 family. Component of the 30S ribosomal translation pre-initiation complex which assembles on the 30S ribosome in the order IF-2 and IF-3, IF-1 and N-formylmethionyl-tRNA(fMet); mRNA recruitment can occur at any time during PIC assembly.

The protein localises to the cytoplasm. One of the essential components for the initiation of protein synthesis. Stabilizes the binding of IF-2 and IF-3 on the 30S subunit to which N-formylmethionyl-tRNA(fMet) subsequently binds. Helps modulate mRNA selection, yielding the 30S pre-initiation complex (PIC). Upon addition of the 50S ribosomal subunit IF-1, IF-2 and IF-3 are released leaving the mature 70S translation initiation complex. In Flavobacterium johnsoniae (strain ATCC 17061 / DSM 2064 / JCM 8514 / BCRC 14874 / CCUG 350202 / NBRC 14942 / NCIMB 11054 / UW101) (Cytophaga johnsonae), this protein is Translation initiation factor IF-1.